Consider the following 244-residue polypeptide: Uracil phosphoribosyltransferase (244 aa).

GTP is bound by residues Lys-59, Arg-68, and 102–105; that span reads YSKI. Arg-112 provides a ligand contact to 5-phospho-alpha-D-ribose 1-diphosphate. Arg-129 is a GTP binding site. Arg-137 contributes to the 5-phospho-alpha-D-ribose 1-diphosphate binding site. Arg-158 provides a ligand contact to GTP. 5-phospho-alpha-D-ribose 1-diphosphate-binding positions include Asp-164 and 164-172; that span reads DPMCATAGS. Uracil contacts are provided by residues Ile-229 and 234 to 236; that span reads GDF. Asp-235 serves as a coordination point for 5-phospho-alpha-D-ribose 1-diphosphate.

This sequence belongs to the UPRTase family. As to quaternary structure, monomer. Forms homodimers in presence of substrates and homotetramers in the presence of GTP. The cofactor is Mg(2+).

It catalyses the reaction UMP + diphosphate = 5-phospho-alpha-D-ribose 1-diphosphate + uracil. Its pathway is pyrimidine metabolism; UMP biosynthesis via salvage pathway; UMP from uracil: step 1/1. Its activity is regulated as follows. Allosterically activated by GTP. Binding of GTP leads to 5-time activation of the enzyme. In terms of biological role, catalyzes the conversion of uracil and 5-phospho-alpha-D-ribose 1-diphosphate (PRPP) to UMP and diphosphate. The protein is Uracil phosphoribosyltransferase (uprt) of Toxoplasma gondii.